A 791-amino-acid polypeptide reads, in one-letter code: Probable phosphoketolase (791 aa).

It belongs to the XFP family. Thiamine diphosphate serves as cofactor.

This chain is Probable phosphoketolase, found in Chlorobaculum tepidum (strain ATCC 49652 / DSM 12025 / NBRC 103806 / TLS) (Chlorobium tepidum).